We begin with the raw amino-acid sequence, 299 residues long: GTPase Era (299 aa).

An Era-type G domain is found at Lys4 to Glu171. A G1 region spans residues Gly12 to Ser19. Gly12–Ser19 provides a ligand contact to GTP. A G2 region spans residues Gln38–Asn42. Residues Asp59–Gly62 are G3. Residues Asp59–Ile63 and Asn121–Asp124 each bind GTP. The interval Asn121 to Asp124 is G4. The G5 stretch occupies residues Ile150–Ala152. The region spanning Thr202–Lys280 is the KH type-2 domain.

This sequence belongs to the TRAFAC class TrmE-Era-EngA-EngB-Septin-like GTPase superfamily. Era GTPase family. As to quaternary structure, monomer.

Its subcellular location is the cytoplasm. The protein localises to the cell membrane. Functionally, an essential GTPase that binds both GDP and GTP, with rapid nucleotide exchange. Plays a role in 16S rRNA processing and 30S ribosomal subunit biogenesis and possibly also in cell cycle regulation and energy metabolism. The protein is GTPase Era of Streptococcus pneumoniae (strain JJA).